The following is a 1048-amino-acid chain: Ankyrin repeat domain-containing protein 27 (1048 aa).

Residues 1 to 372 (MALYDEDLLK…RQGSLSTKTP (372 aa)) are sufficient for GEF activity towards RAB21. Positions 233–371 (ASEDAAFNKI…IRQGSLSTKT (139 aa)) constitute a VPS9 domain. ANK repeat units lie at residues 396-426 (TPID…DKDA), 462-491 (RGQT…VVNA), 495-524 (HGST…STEV), 528-557 (NGNT…QACR), 564-593 (KGDT…PTAV), and 597-627 (LKET…RPRP). The sufficient for interaction with VPS29 stretch occupies residues 396–460 (TPIDCLFKHI…PSVVTPFSRD (65 aa)). Positions 451-600 (PSVVTPFSRD…TAVQNRLKET (150 aa)) are interaction with RAB38. Residues 451–729 (PSVVTPFSRD…CAPAQKLARI (279 aa)) form an interaction with RAB32 region. The segment covering 618–627 (HLSSDRRPRP) has biased composition (basic and acidic residues). The segment at 618-650 (HLSSDRRPRPSEVPAQSPTRSVDSISQGSSTSS) is disordered. Positions 638 to 650 (SVDSISQGSSTSS) are enriched in low complexity. The segment at 658–707 (FRQEEVKKDYREVEKLLRAVADGDLEMVRYLLEWTEDDLDDVEDAISTVD) is required for interaction with VAMP7. ANK repeat units lie at residues 668 to 698 (REVE…DLDD), 742 to 771 (DGFS…YSGA), 775 to 804 (SQAV…KPNK), 808 to 837 (SGNT…SINA), and 841 to 870 (KGNT…SVDI). The sufficient for interaction with VPS29 stretch occupies residues 692–745 (TEDDLDDVEDAISTVDLEFCHPLCQCPKCAPAQKLARISANGLSVNVTNQDGFS). Basic and acidic residues predominate over residues 949 to 962 (ERTSRETMGRDRSV). The segment at 949 to 1019 (ERTSRETMGR…AAPGHRPMVR (71 aa)) is disordered. Residues Ser961 and Ser969 each carry the phosphoserine modification. A compositionally biased stretch (polar residues) spans 979 to 995 (TGKQSDLSDLSRYQTSE). Basic and acidic residues predominate over residues 996–1006 (EGNKGLPERPV). The residue at position 1022 (Thr1022) is a Phosphothreonine.

In terms of assembly, interacts with RAB21 (GDP-bound form), VPS29, KIF5A, KIF5C, GOLGA4. Interacts with RAB32 (GTP-bound form), RAB38 (GTP-bound form), VAMP7. Interacts with low affinity with RAB5. ANKRD27:RAB32 heterodimers can homodimerize to form tetramers. Can interact with RAB38 or RAB32, VPS29 and VAMP7 simultaneously. A decreased interaction with RAB32 seen in the presence of SGSM2.

Its subcellular location is the early endosome. It is found in the late endosome. The protein resides in the cytoplasmic vesicle membrane. The protein localises to the lysosome. It localises to the cell membrane. Its subcellular location is the melanosome. It is found in the cytoplasmic vesicle. May be a guanine exchange factor (GEF) for Rab21, Rab32 and Rab38 and regulate endosome dynamics. May regulate the participation of VAMP7 in membrane fusion events; in vitro inhibits VAMP7-mediated SNARE complex formation by trapping VAMP7 in a closed, fusogenically inactive conformation. Involved in peripheral melanosomal distribution of TYRP1 in melanocytes; the function, which probably is implicating vesicle-trafficking, includes cooperation with Rab32, Rab38 and VAMP7. Involved in the regulation of neurite growth; the function seems to require its GEF activity, probably towards Rab21, and VAMP7 but not Rab32/38. Proposed to be involved in Golgi sorting of VAMP7 and transport of VAMP7 vesicles to the cell surface; the function seems to implicate kinesin heavy chain isoform 5 proteins, GOLGA4, RAB21 and MACF1. Required for the colocalization of VAMP7 and Rab21, probably on TGN sites. Involved in GLUT1 endosome-to-plasma membrane trafficking; the function is dependent of association with VPS29. Regulates the proper trafficking of melanogenic enzymes TYR, TYRP1 and DCT/TYRP2 to melanosomes in melanocytes. The polypeptide is Ankyrin repeat domain-containing protein 27 (Ankrd27) (Mus musculus (Mouse)).